The chain runs to 176 residues: Adenine phosphoribosyltransferase (176 aa).

It belongs to the purine/pyrimidine phosphoribosyltransferase family. Homodimer.

It localises to the cytoplasm. It catalyses the reaction AMP + diphosphate = 5-phospho-alpha-D-ribose 1-diphosphate + adenine. It participates in purine metabolism; AMP biosynthesis via salvage pathway; AMP from adenine: step 1/1. Catalyzes a salvage reaction resulting in the formation of AMP, that is energically less costly than de novo synthesis. This chain is Adenine phosphoribosyltransferase, found in Roseobacter denitrificans (strain ATCC 33942 / OCh 114) (Erythrobacter sp. (strain OCh 114)).